We begin with the raw amino-acid sequence, 551 residues long: MSNYAPFIKPYVEYNEHGWGPCEVPELDVPYQPFCKSDRLGKICDWTAMVPEKKFPSKYASTFGNNSQYAYFYEDDDSTFHLVDTTGSKATKPYQRGRYRTNMRNNVRTRGRTGRGTPNIASLGGSTAGGATASSTKYGKGRHTRNTQNVGRRFGRNAPTRIRESSVMVQSNWVSIEEIDFPRLLKLALPNIKEGKDIATCGSLEFYDKLYDRVNLRNEKPLQKMARVVHTVTTTDDPVIRRLSKTMGNVFATDEILSTIMCCTRSNYSWDVVVEKLGTKVFLDKRYNDQFDLLTVNETSVEPPMEEEGSINSAHSLAMEATLINHNFSQQVLRIGDQEQRFMFEEPNPFEEPGVDLASIGYRYRQWDLGNDVVLIARCKHNAVIQGPNGDMQFLSIKALNEWDSKVTNSVEWRQKLDTQRGAVLASELRNNACKLARWTVEAVLAGSDQLKLGYVSRMNPRDHLRHVILGTQQFKPQEFATQINLNMDNSWGVLRCLIDLVMKQPDGKYLIMKDPNKPMIRLYDVPENAFDSDRDEEEESSEPLSNSNDN.

Positions R108–R152 are disordered. A compositionally biased stretch (low complexity) spans R115–T136. The RNA gate stretch occupies residues Q290–P304. Residues P527 to N551 are disordered.

The protein belongs to the eIF-3 subunit D family. Component of the eukaryotic translation initiation factor 3 (eIF-3) complex. The eIF-3 complex interacts with pix.

It localises to the cytoplasm. MRNA cap-binding component of the eukaryotic translation initiation factor 3 (eIF-3) complex, which is involved in protein synthesis of a specialized repertoire of mRNAs and, together with other initiation factors, stimulates binding of mRNA and methionyl-tRNAi to the 40S ribosome. The eIF-3 complex specifically targets and initiates translation of a subset of mRNAs involved in cell proliferation. In the eIF-3 complex, eif3d specifically recognizes and binds the 7-methylguanosine cap of a subset of mRNAs. The chain is Eukaryotic translation initiation factor 3 subunit D-2 from Drosophila simulans (Fruit fly).